The sequence spans 554 residues: Phosphomannomutase (554 aa).

The active-site Phosphoserine intermediate is the Ser149. Mg(2+) contacts are provided by Ser149, Asp301, Asp303, and Asp305.

This sequence belongs to the phosphohexose mutase family. The cofactor is Mg(2+).

The enzyme catalyses alpha-D-mannose 1-phosphate = D-mannose 6-phosphate. This chain is Phosphomannomutase (manB), found in Mycoplasma pneumoniae (strain ATCC 29342 / M129 / Subtype 1) (Mycoplasmoides pneumoniae).